Consider the following 1050-residue polypeptide: FHIP family protein GE18198 (1050 aa).

2 positions are modified to phosphoserine: S498 and S805. Disordered regions lie at residues 800-827 (KGNE…GQLR), 865-888 (TSMF…SASS), 911-954 (TDGR…SGSN), and 968-995 (SNTT…SEPA). Positions 808–826 (HHSQQQQMATNSGQQQGQL) are enriched in polar residues. The span at 872 to 888 (SASNTSTTPPNGSSASS) shows a compositional bias: low complexity. The span at 918–935 (HAQTSAGTCETSLSTQPQ) shows a compositional bias: polar residues. The segment covering 941–954 (TGAIATSATASGSN) has biased composition (low complexity). A compositionally biased stretch (polar residues) spans 968–977 (SNTTTHSAST).

The protein belongs to the FHIP family.

This chain is FHIP family protein GE18198, found in Drosophila yakuba (Fruit fly).